The chain runs to 72 residues: Translation initiation factor IF-1 2 (72 aa).

The S1-like domain maps to 1 to 72 (MAKDDVIQMQ…SRARIVFRTK (72 aa)).

The protein belongs to the IF-1 family. As to quaternary structure, component of the 30S ribosomal translation pre-initiation complex which assembles on the 30S ribosome in the order IF-2 and IF-3, IF-1 and N-formylmethionyl-tRNA(fMet); mRNA recruitment can occur at any time during PIC assembly.

It is found in the cytoplasm. Its function is as follows. One of the essential components for the initiation of protein synthesis. Stabilizes the binding of IF-2 and IF-3 on the 30S subunit to which N-formylmethionyl-tRNA(fMet) subsequently binds. Helps modulate mRNA selection, yielding the 30S pre-initiation complex (PIC). Upon addition of the 50S ribosomal subunit IF-1, IF-2 and IF-3 are released leaving the mature 70S translation initiation complex. The sequence is that of Translation initiation factor IF-1 2 from Cupriavidus metallidurans (strain ATCC 43123 / DSM 2839 / NBRC 102507 / CH34) (Ralstonia metallidurans).